Consider the following 174-residue polypeptide: uncharacterized protein (174 aa).

This sequence belongs to the NAD(P)H dehydrogenase (quinone) family.

This is an uncharacterized protein from Bacillus subtilis (strain 168).